The following is a 339-amino-acid chain: Cathepsin L (339 aa).

A signal peptide spans 1-17 (MRTVLVALLALVALTQA). Residues 18–121 (ISPLDLIKEE…ATYIPPAHVT (104 aa)) constitute a propeptide, activation peptide. Asn96 carries N-linked (GlcNAc...) asparagine glycosylation. Disulfide bonds link Cys143-Cys186, Cys177-Cys219, and Cys278-Cys328. Residue Cys146 is part of the active site. The active site involves His285. Positions 295–298 (DESG) are excised as a propeptide. The active site involves Asn306.

The protein belongs to the peptidase C1 family. In terms of assembly, dimer of a heavy and a light chain linked by disulfide bonds.

It localises to the lysosome. The catalysed reaction is Specificity close to that of papain. As compared to cathepsin B, cathepsin L exhibits higher activity toward protein substrates, but has little activity on Z-Arg-Arg-NHMec, and no peptidyl-dipeptidase activity.. Important for the overall degradation of proteins in lysosomes. Required for differentiation of imaginal disks. The sequence is that of Cathepsin L from Sarcophaga peregrina (Flesh fly).